Reading from the N-terminus, the 129-residue chain is Large ribosomal subunit protein uL14m (129 aa).

This sequence belongs to the universal ribosomal protein uL14 family.

Its subcellular location is the mitochondrion. This is Large ribosomal subunit protein uL14m (RPL14) from Acanthamoeba castellanii (Amoeba).